Reading from the N-terminus, the 486-residue chain is Iron-sulfur cluster assembly SufBD family protein ycf24 (486 aa).

It belongs to the iron-sulfur cluster assembly SufBD family.

Its subcellular location is the plastid. It localises to the chloroplast. The polypeptide is Iron-sulfur cluster assembly SufBD family protein ycf24 (ycf24) (Trieres chinensis (Marine centric diatom)).